Reading from the N-terminus, the 505-residue chain is Putative heat shock protein HSP 90-beta 4 (505 aa).

Positions 22, 83, and 109 each coordinate ATP. Residues 197–248 (EKEISDDEEEKGEKEEEDKDDKEKPKTEDVGSDEEDDTDKNNKKKTKKIKEK) form a disordered region. Residues 200–216 (ISDDEEEKGEKEEEDKD) show a composition bias toward acidic residues.

This sequence belongs to the heat shock protein 90 family. In terms of assembly, homodimer.

Its subcellular location is the cytoplasm. In terms of biological role, putative molecular chaperone that may promote the maturation, structural maintenance and proper regulation of specific target proteins. The chain is Putative heat shock protein HSP 90-beta 4 (HSP90AB4P) from Homo sapiens (Human).